Here is a 256-residue protein sequence, read N- to C-terminus: Follistatin-related protein 3 (256 aa).

The signal sequence occupies residues 1 to 23 (MRPGALWPLLWGALVWAVGSVGA). Residues 34-105 (GVCWLQQGKE…SCDGVECGPG (72 aa)) form the TB domain. Disulfide bonds link Cys-36-Cys-59, Cys-46-Cys-90, Cys-60-Cys-93, Cys-97-Cys-108, Cys-102-Cys-117, Cys-119-Cys-151, Cys-123-Cys-144, and Cys-133-Cys-165. Asn-71 carries N-linked (GlcNAc...) asparagine glycosylation. In terms of domain architecture, Follistatin-like 1 spans 97–117 (CDGVECGPGKACRMLGGRPHC). Kazal-like domains follow at residues 111–167 (LGGR…RCQK) and 187–243 (SAHC…ICTG). One can recognise a Follistatin-like 2 domain in the interval 168-191 (SCAQVVCPRPQSCLVDQTGSAHCV). Cystine bridges form between Cys-193-Cys-227, Cys-198-Cys-220, and Cys-209-Cys-241. Residue Asn-213 is glycosylated (N-linked (GlcNAc...) asparagine).

In terms of assembly, interacts with INHBA and INHBB. Interacts with FN1. Interacts with ADAM12. Interacts with MLLT10; the interaction enhances MLLT10 in vitro transcriptional activity and self-association. Interacts with MSTN.

Its subcellular location is the secreted. It localises to the nucleus. The secreted form is a binding and antagonizing protein for members of the TGF-beta family, such as activin, BMP2 and MSTN. Inhibits activin A-, activin B-, BMP2- and MSDT-induced cellular signaling; more effective on activin A than on activin B. Involved in bone formation; inhibits osteoclast differentiation. Involved in hematopoiesis; involved in differentiation of hemopoietic progenitor cells, increases hematopoietic cell adhesion to fibronectin and seems to contribute to the adhesion of hematopoietic precursor cells to the bone marrow stroma. The nuclear form is probably involved in transcriptional regulation via interaction with MLLT10. The protein is Follistatin-related protein 3 (Fstl3) of Rattus norvegicus (Rat).